Reading from the N-terminus, the 309-residue chain is L-aminoadipate-semialdehyde dehydrogenase-phosphopantetheinyl transferase (309 aa).

Residues Arg47, Arg86–Lys91, and Asn108–His111 contribute to the CoA site. Residues Asp129 and Glu181 each coordinate Mg(2+). CoA is bound at residue Glu181–Lys185. The residue at position 258 (Ser258) is a Phosphoserine.

This sequence belongs to the P-Pant transferase superfamily. AcpS family. As to quaternary structure, monomer. It depends on Mg(2+) as a cofactor. As to expression, detected in heart, skeletal muscle, placenta, testis, brain, pancreas, liver and kidney.

It is found in the cytoplasm. The protein localises to the cytosol. It carries out the reaction apo-[ACP] + CoA = holo-[ACP] + adenosine 3',5'-bisphosphate + H(+). It catalyses the reaction apo-[ACP] + acetyl-CoA = acetyl-[ACP] + adenosine 3',5'-bisphosphate + H(+). Catalyzes the post-translational modification of target proteins by phosphopantetheine. Can transfer the 4'-phosphopantetheine moiety from coenzyme A, regardless of whether the CoA is presented in the free thiol form or as an acetyl thioester, to a serine residue of a broad range of acceptors including the acyl carrier domain of FASN. The protein is L-aminoadipate-semialdehyde dehydrogenase-phosphopantetheinyl transferase (AASDHPPT) of Homo sapiens (Human).